Consider the following 2812-residue polypeptide: Zonadhesin (2812 aa).

An N-terminal signal peptide occupies residues M1–F17. Residues R18 to S2757 are Extracellular-facing. 3 consecutive MAM domains span residues T39–R204, Q209–E368, and P371–V536. Positions E61–G84 are disordered. Residues A66–T75 are compositionally biased toward low complexity. 2 N-linked (GlcNAc...) asparagine glycosylation sites follow: N333 and N493. Disordered regions lie at residues V545–K884 and E904–I929. The span at P547–G558 shows a compositional bias: low complexity. Residues L559 to P570 show a composition bias toward polar residues. The segment at S573 to T1041 is 66 X heptapeptide repeats (approximate) (mucin-like domain). Low complexity-rich tracts occupy residues T592–E603, T651–P675, S713–K842, S853–P868, and S916–I929. The TIL 1 domain occupies C1044–C1093. Residues E1103–H1148 form the VWFC 1 domain. Residues N1112 and N1188 are each glycosylated (N-linked (GlcNAc...) asparagine). One can recognise a VWFD 1 domain in the interval A1154 to Q1331. Cystine bridges form between C1156/C1291 and C1178/C1330. Positions H1302–L1316 are enriched in basic and acidic residues. The disordered stretch occupies residues H1302–D1323. One can recognise a TIL 2 domain in the interval C1426–C1479. The 56-residue stretch at G1480–H1535 folds into the VWFC 2 domain. One can recognise a VWFD 2 domain in the interval A1540 to F1720. 2 cysteine pairs are disulfide-bonded: C1542/C1680 and C1564/C1719. N-linked (GlcNAc...) asparagine glycosylation is found at N1685 and N1804. The 56-residue stretch at C1812–C1867 folds into the TIL 3 domain. The 57-residue stretch at G1868–R1924 folds into the VWFC 3 domain. Residues N1900 and N1946 are each glycosylated (N-linked (GlcNAc...) asparagine). Residues G1929 to Q2108 form the VWFD 3 domain. Cystine bridges form between C1931–C2069 and C1953–C2107. N-linked (GlcNAc...) asparagine glycosylation occurs at N2203. Residues C2211 to C2267 form the TIL 4 domain. The VWFC 4 domain occupies G2268–E2329. The 177-residue stretch at E2329–L2505 folds into the VWFD 4 domain. A disulfide bond links C2331 and C2468. N-linked (GlcNAc...) asparagine glycans are attached at residues N2542 and N2701. Residues C2652–R2797 enclose the VWFC 5 domain. The 37-residue stretch at P2708–M2744 folds into the EGF-like domain. 3 disulfides stabilise this stretch: C2712-C2723, C2717-C2732, and C2734-C2743. The helical transmembrane segment at N2758–T2778 threads the bilayer. The Cytoplasmic portion of the chain corresponds to R2779 to C2812.

In terms of assembly, probably forms covalent oligomers. In terms of tissue distribution, in testis, primarily in haploid spermatids.

The protein resides in the cell membrane. Functionally, binds in a species-specific manner to the zona pellucida of the egg. May be involved in gamete recognition and/or signaling. This is Zonadhesin (ZAN) from Homo sapiens (Human).